We begin with the raw amino-acid sequence, 1385 residues long: DNA-directed RNA polymerase subunit beta' (1385 aa).

Cys-72, Cys-74, Cys-87, and Cys-90 together coordinate Zn(2+). 3 residues coordinate Mg(2+): Asp-467, Asp-469, and Asp-471. Zn(2+) is bound by residues Cys-829, Cys-910, Cys-917, and Cys-920.

The protein belongs to the RNA polymerase beta' chain family. In terms of assembly, the RNAP catalytic core consists of 2 alpha, 1 beta, 1 beta' and 1 omega subunit. When a sigma factor is associated with the core the holoenzyme is formed, which can initiate transcription. The cofactor is Mg(2+). It depends on Zn(2+) as a cofactor.

It carries out the reaction RNA(n) + a ribonucleoside 5'-triphosphate = RNA(n+1) + diphosphate. Its function is as follows. DNA-dependent RNA polymerase catalyzes the transcription of DNA into RNA using the four ribonucleoside triphosphates as substrates. The chain is DNA-directed RNA polymerase subunit beta' from Elusimicrobium minutum (strain Pei191).